The following is a 591-amino-acid chain: Aspartate--tRNA ligase (591 aa).

L-aspartate is bound at residue glutamate 173. Residues 197-200 form an aspartate region; it reads QLFK. Residue arginine 219 participates in L-aspartate binding. ATP contacts are provided by residues 219 to 221 and glutamine 228; that span reads RDE. L-aspartate is bound at residue histidine 448. ATP is bound at residue glutamate 482. Arginine 489 contacts L-aspartate. 534-537 is a binding site for ATP; that stretch reads GLDR.

The protein belongs to the class-II aminoacyl-tRNA synthetase family. Type 1 subfamily. Homodimer.

It is found in the cytoplasm. The enzyme catalyses tRNA(Asp) + L-aspartate + ATP = L-aspartyl-tRNA(Asp) + AMP + diphosphate. Functionally, catalyzes the attachment of L-aspartate to tRNA(Asp) in a two-step reaction: L-aspartate is first activated by ATP to form Asp-AMP and then transferred to the acceptor end of tRNA(Asp). The chain is Aspartate--tRNA ligase from Shewanella frigidimarina (strain NCIMB 400).